We begin with the raw amino-acid sequence, 318 residues long: Cephalosporin-C deacetylase (318 aa).

Position 91 (Tyr-91) interacts with substrate. Catalysis depends on Ser-181, which acts as the Nucleophile. Residues Asp-269 and His-298 each act as charge relay system in the active site.

The protein belongs to the carbohydrate esterase 7 family. As to quaternary structure, homohexamer.

The protein localises to the cytoplasm. The enzyme catalyses Deacetylation of xylans and xylo-oligosaccharides.. The catalysed reaction is cephalosporin C + H2O = deacetylcephalosporin C + acetate + H(+). Esterase that removed acetyl groups from a number of O-acetylated small substrates, such as acetylated xylose, short xylooligosaccharides and cephalosporin C. Has no activity towards polymeric acetylated xylan. Cannot cleave amide linkages. The protein is Cephalosporin-C deacetylase (cah) of Bacillus subtilis (strain 168).